Reading from the N-terminus, the 222-residue chain is Eukaryotic translation initiation factor 3 subunit K (222 aa).

The 163-residue stretch at 46 to 208 (YDLEANLAVL…KIKTKNITEK (163 aa)) folds into the PCI domain.

The protein belongs to the eIF-3 subunit K family. In terms of assembly, component of the eukaryotic translation initiation factor 3 (eIF-3) complex. The eIF-3 complex interacts with pix.

The protein localises to the cytoplasm. Its function is as follows. Component of the eukaryotic translation initiation factor 3 (eIF-3) complex, which is involved in protein synthesis of a specialized repertoire of mRNAs and, together with other initiation factors, stimulates binding of mRNA and methionyl-tRNAi to the 40S ribosome. The eIF-3 complex specifically targets and initiates translation of a subset of mRNAs involved in cell proliferation. This chain is Eukaryotic translation initiation factor 3 subunit K, found in Drosophila ananassae (Fruit fly).